Here is a 447-residue protein sequence, read N- to C-terminus: MEQRSFFIKTYGCQMNLRDSEIIAQILNNNGYVETSEIGGADLVLLNTCSIRAKAEQKVMSKLGELRRNKKINPRMQICVAGCVAQQEGKQIQAKMPHVDLVIGTQYIYAINELLERSRTEGPITATNLDDKYVIPQFIPETTGKEHEGEFRKFVTIMQGCNNFCTYCVVPYTRGREVSRSIKDIVEEITVLVKSGIKEITLLGQNVNSYAQTNTVTEDDTPATFSDLLRQVAAVEGLKRLRFTTSNPKDLSNDLMQCFKDLDVLCPQFHLPVQAGSNKVLKEMGRKYTVESYLDLVTQLRENCPEIAITTDIIVGFPGETDEEFEETMKMLETVRYHGSFSFKYSDRPGTKANELTNKVDESVKSARLARFQARQDEIGLERNQEYIGTTQEVLIEELRDGEIKGRMGTNHIVHAIGLTNKKPGDFLMAHVTAAGQHSLRGSIVEE.

Residues 4–120 (RSFFIKTYGC…INELLERSRT (117 aa)) enclose the MTTase N-terminal domain. Residues Cys13, Cys49, Cys83, Cys161, Cys165, and Cys168 each contribute to the [4Fe-4S] cluster site. The Radical SAM core domain occupies 147–382 (HEGEFRKFVT…QARQDEIGLE (236 aa)). Residues 385 to 446 (QEYIGTTQEV…QHSLRGSIVE (62 aa)) enclose the TRAM domain.

The protein belongs to the methylthiotransferase family. MiaB subfamily. Monomer. [4Fe-4S] cluster is required as a cofactor.

The protein localises to the cytoplasm. The catalysed reaction is N(6)-dimethylallyladenosine(37) in tRNA + (sulfur carrier)-SH + AH2 + 2 S-adenosyl-L-methionine = 2-methylsulfanyl-N(6)-dimethylallyladenosine(37) in tRNA + (sulfur carrier)-H + 5'-deoxyadenosine + L-methionine + A + S-adenosyl-L-homocysteine + 2 H(+). In terms of biological role, catalyzes the methylthiolation of N6-(dimethylallyl)adenosine (i(6)A), leading to the formation of 2-methylthio-N6-(dimethylallyl)adenosine (ms(2)i(6)A) at position 37 in tRNAs that read codons beginning with uridine. This is tRNA-2-methylthio-N(6)-dimethylallyladenosine synthase from Desulfotalea psychrophila (strain LSv54 / DSM 12343).